A 1033-amino-acid chain; its full sequence is Error-prone DNA polymerase (1033 aa).

This sequence belongs to the DNA polymerase type-C family. DnaE2 subfamily.

It is found in the cytoplasm. It catalyses the reaction DNA(n) + a 2'-deoxyribonucleoside 5'-triphosphate = DNA(n+1) + diphosphate. DNA polymerase involved in damage-induced mutagenesis and translesion synthesis (TLS). It is not the major replicative DNA polymerase. This is Error-prone DNA polymerase from Teredinibacter turnerae (strain ATCC 39867 / T7901).